The primary structure comprises 145 residues: uncharacterized protein (145 aa).

It belongs to the methyltransferase superfamily.

Functionally, probable methyltransferase. This is an uncharacterized protein from Schizosaccharomyces pombe (strain 972 / ATCC 24843) (Fission yeast).